A 354-amino-acid chain; its full sequence is Guanine nucleotide-binding protein G(t) subunit alpha-3 (354 aa).

A disordered region spans residues 1–27; that stretch reads MGSGISSESKESAKRSKELEKKLQEDA. Residue G2 is the site of N-myristoyl glycine attachment. Basic and acidic residues predominate over residues 8–27; that stretch reads ESKESAKRSKELEKKLQEDA. Residues 32–354 enclose the G-alpha domain; the sequence is RTVKLLLLGA…KENLKDCGLF (323 aa). The segment at 35-48 is G1 motif; the sequence is KLLLLGAGESGKST. GTP-binding positions include 40–47, 175–181, 200–204, 269–272, and A326; these read GAGESGKS, LHSRVKT, DVGGQ, and NKKD. Residues S47 and T181 each contribute to the Mg(2+) site. The interval 173–181 is G2 motif; sequence DVLHSRVKT. The segment at 196–205 is G3 motif; the sequence is FRMFDVGGQR. The interval 265-272 is G4 motif; the sequence is VLFLNKKD. The G5 motif stretch occupies residues 324-329; that stretch reads TCATDT.

The protein belongs to the G-alpha family. G(i/o/t/z) subfamily. As to quaternary structure, g proteins are composed of 3 units; alpha, beta and gamma, respectively GNAT3, GNB1 and GNG13 for Gustducin heterotrimer for bitter taste transduction. The alpha chain contains the guanine nucleotide binding site. Component of the TAS2R14-GNAT3 complex, consisting of TAS2R14, GNAT3, GNB1 and GNG2; within the complex interacts with TAS2R14; this complex plays a role in the perception of bitterness. Gustducin heterotrimer may also be composed of GNAT3, GNB3 and GNG13. Potential N-myristoylation may anchor alpha-subunit to the inner surface of plasma membrane. In terms of tissue distribution, expressed in taste buds (sensory organs of clustered epithelial cells) of the circumvallate and foliate papillae of the tongue at protein level. Expressed in enteroendocrine L cells of the gut. Detected also in spermatozoa.

It is found in the cytoplasm. Guanine nucleotide-binding protein (G protein) alpha subunit playing a prominent role in bitter and sweet taste transduction as well as in umami (monosodium glutamate, monopotassium glutamate, and inosine monophosphate) taste transduction. Transduction by this alpha subunit involves coupling of specific cell-surface receptors with a cGMP-phosphodiesterase; Activation of phosphodiesterase lowers intracellular levels of cAMP and cGMP which may open a cyclic nucleotide-suppressible cation channel leading to influx of calcium, ultimately leading to release of neurotransmitter. Indeed, denatonium and strychnine induce transient reduction in cAMP and cGMP in taste tissue, whereas this decrease is inhibited by GNAT3 antibody. Gustducin heterotrimer transduces response to bitter and sweet compounds via regulation of phosphodiesterase for alpha subunit, as well as via activation of phospholipase C for beta and gamma subunits, with ultimate increase inositol trisphosphate and increase of intracellular Calcium. GNAT3 can functionally couple to taste receptors to transmit intracellular signal: receptor heterodimer TAS1R2/TAS1R3 senses sweetness and TAS1R1/TAS1R3 transduces umami taste, whereas the T2R family GPCRs such as TAS2R14 act as bitter sensors. Also functions as lumenal sugar sensors in the gut to control the expression of the Na+-glucose transporter SGLT1 in response to dietaty sugar, as well as the secretion of Glucagon-like peptide-1, GLP-1 and glucose-dependent insulinotropic polypeptide, GIP. Thus, may modulate the gut capacity to absorb sugars, with implications in malabsorption syndromes and diet-related disorders including diabetes and obesity. The protein is Guanine nucleotide-binding protein G(t) subunit alpha-3 (GNAT3) of Homo sapiens (Human).